Reading from the N-terminus, the 550-residue chain is Glucose-6-phosphate isomerase (550 aa).

Residues 163–164, 214–219, Gln358, Glu362, His393, and Lys515 each bind D-glucose 6-phosphate; these read GS and SKTFTT. The active-site Proton donor is the Glu362. Active-site residues include His393 and Lys515.

It belongs to the GPI family. In terms of assembly, homodimer.

It is found in the cytoplasm. The catalysed reaction is alpha-D-glucose 6-phosphate = beta-D-fructose 6-phosphate. Its pathway is carbohydrate degradation; glycolysis; D-glyceraldehyde 3-phosphate and glycerone phosphate from D-glucose: step 2/4. Functionally, in the cytoplasm, catalyzes the conversion of glucose-6-phosphate to fructose-6-phosphate, the second step in glycolysis, and the reverse reaction during gluconeogenesis. This is Glucose-6-phosphate isomerase (PGI1) from Candida albicans (strain SC5314 / ATCC MYA-2876) (Yeast).